The following is a 261-amino-acid chain: 5'-nucleotidase SurE (261 aa).

A divalent metal cation contacts are provided by aspartate 12, aspartate 13, serine 43, and asparagine 99.

The protein belongs to the SurE nucleotidase family. Requires a divalent metal cation as cofactor.

The protein resides in the cytoplasm. The catalysed reaction is a ribonucleoside 5'-phosphate + H2O = a ribonucleoside + phosphate. Its function is as follows. Nucleotidase that shows phosphatase activity on nucleoside 5'-monophosphates. This chain is 5'-nucleotidase SurE, found in Polynucleobacter asymbioticus (strain DSM 18221 / CIP 109841 / QLW-P1DMWA-1) (Polynucleobacter necessarius subsp. asymbioticus).